The chain runs to 357 residues: Undecaprenyl-phosphate alpha-N-acetylglucosaminyl 1-phosphate transferase (357 aa).

7 helical membrane passes run 40-60 (GAIPLIGGVSLFVGNLCFYLL), 64-84 (QMRLPTLYLFSIFVLLVIGMI), 124-144 (FQLTLGSIGLIITVLATIAAI), 183-203 (WSFALIIAILPYFMMNLGIPF), 209-229 (VFMGDAGSTLIGFTIIWILLL), 238-258 (MNPVTALWIIAIPLIDMIAIM), and 291-311 (FLLITFAAAICATIGILGEIF).

Belongs to the glycosyltransferase 4 family. WecA subfamily. Requires Mg(2+) as cofactor. Mn(2+) serves as cofactor.

The protein localises to the cell inner membrane. The catalysed reaction is di-trans,octa-cis-undecaprenyl phosphate + UDP-N-acetyl-alpha-D-glucosamine = N-acetyl-alpha-D-glucosaminyl-di-trans,octa-cis-undecaprenyl diphosphate + UMP. Its pathway is bacterial outer membrane biogenesis; LPS O-antigen biosynthesis. Functionally, catalyzes the transfer of the GlcNAc-1-phosphate moiety from UDP-GlcNAc onto the carrier lipid undecaprenyl phosphate (C55-P), yielding GlcNAc-pyrophosphoryl-undecaprenyl (GlcNAc-PP-C55). In Pasteurella multocida (strain Pm70), this protein is Undecaprenyl-phosphate alpha-N-acetylglucosaminyl 1-phosphate transferase.